Reading from the N-terminus, the 665-residue chain is Ion-translocating oxidoreductase complex subunit C (665 aa).

2 consecutive 4Fe-4S ferredoxin-type domains span residues 368-398 (EYAE…QQLY) and 408-437 (KSEE…IQYF). [4Fe-4S] cluster is bound by residues Cys378, Cys381, Cys384, Cys388, Cys417, Cys420, Cys423, and Cys427. Basic and acidic residues-rich tracts occupy residues 465–477 (QARM…ERKA) and 485–513 (ARRE…KANE). Disordered stretches follow at residues 465-568 (QARM…DAKK), 580-623 (AKKL…LDPK), and 637-665 (KKLA…QIVR). Composition is skewed to polar residues over residues 554-564 (VENQEQQTQPT) and 585-600 (QTNS…QTAE). Over residues 602–615 (EVEKTKSAVEKTEE) the composition is skewed to basic and acidic residues. Polar residues predominate over residues 643 to 656 (NSTSEAISNSQTAE).

The protein belongs to the 4Fe4S bacterial-type ferredoxin family. RnfC subfamily. In terms of assembly, the complex is composed of six subunits: RnfA, RnfB, RnfC, RnfD, RnfE and RnfG. Requires [4Fe-4S] cluster as cofactor.

It is found in the cell inner membrane. In terms of biological role, part of a membrane-bound complex that couples electron transfer with translocation of ions across the membrane. The chain is Ion-translocating oxidoreductase complex subunit C from Haemophilus influenzae (strain 86-028NP).